The sequence spans 363 residues: Biotin synthase (363 aa).

Residues 38-266 (NTVQVSTLLS…ETQVRLSAGR (229 aa)) form the Radical SAM core domain. [4Fe-4S] cluster contacts are provided by C53, C57, and C60. 4 residues coordinate [2Fe-2S] cluster: C97, C129, C189, and R261. The disordered stretch occupies residues 315 to 363 (KAFEKKSQPESVAAEKSKYQSQGEKPRWSRPEHKIDRNLEAQQNAKTKA). Positions 316–353 (AFEKKSQPESVAAEKSKYQSQGEKPRWSRPEHKIDRNL) are enriched in basic and acidic residues. Residues 354-363 (EAQQNAKTKA) show a composition bias toward polar residues.

This sequence belongs to the radical SAM superfamily. Biotin synthase family. As to quaternary structure, homodimer. The cofactor is [4Fe-4S] cluster. [2Fe-2S] cluster is required as a cofactor.

It catalyses the reaction (4R,5S)-dethiobiotin + (sulfur carrier)-SH + 2 reduced [2Fe-2S]-[ferredoxin] + 2 S-adenosyl-L-methionine = (sulfur carrier)-H + biotin + 2 5'-deoxyadenosine + 2 L-methionine + 2 oxidized [2Fe-2S]-[ferredoxin]. It participates in cofactor biosynthesis; biotin biosynthesis; biotin from 7,8-diaminononanoate: step 2/2. In terms of biological role, catalyzes the conversion of dethiobiotin (DTB) to biotin by the insertion of a sulfur atom into dethiobiotin via a radical-based mechanism. The chain is Biotin synthase from Christiangramia forsetii (strain DSM 17595 / CGMCC 1.15422 / KT0803) (Gramella forsetii).